A 207-amino-acid polypeptide reads, in one-letter code: Ras-related protein Rab-8A (207 aa).

Serine 17, glycine 18, valine 19, glycine 20, lysine 21, threonine 22, cysteine 23, serine 35, serine 39, and threonine 40 together coordinate GTP. Threonine 22 is a binding site for Mg(2+). Short sequence motifs (switch) lie at residues 31-45 (DAFNSTFISTIGIDF) and 63-80 (DTAGQERFRTITTAYYRG). Threonine 40 and aspartate 63 together coordinate Mg(2+). GTP is bound at residue glycine 66. Threonine 72 carries the post-translational modification Phosphothreonine; by LRRK2. Positions 121, 122, 124, 152, and 153 each coordinate GTP. A phosphoserine mark is found at serine 181 and serine 185. Cysteine 204 is modified (cysteine methyl ester). Cysteine 204 is lipidated: S-geranylgeranyl cysteine. The propeptide at 205-207 (SLL) is removed in mature form.

The protein belongs to the small GTPase superfamily. Rab family. In terms of assembly, interacts (GTP-bound form) with MICALL1; regulates RAB8A association with recycling endosomes. Interacts with MICALL2; competes with RAB13 and is involved in E-cadherin endocytic recycling. Interacts (GTP-bound form) with MICAL1, MICALCL, MICAL3 and EHBP1L1; two molecules of RAB8A can bind to one molecule of the effector protein; ternary complexes of RAB8A, RAB13 and either MICAL1 or EHBP1L1 are possible. Interacts (GTP-bound form) with EHBP1. Interacts with EHD1. Interacts with MAP4K2 and SYTL4. Interacts with SGSM1 and SGSM3. Interacts with RABIF, RIMS2, RPH3A and RPH3A. Interacts with OPTN. Interacts with MYO5B. Interacts with CIMAP3. Interacts with BIRC6/bruce. Interacts with OCRL. Interacts with AHI1. Interacts with DCDC1. Interacts with LRRK2; interaction facilitates phosphorylation of Thr-72. Interacts with RAB31P, GDI1, GDI2, CHM, CHML, RABGGTA, RABGGTB, TBC1D15 and INPP5B; these interactions are dependent on Thr-72 not being phosphorylated. Interacts with RILPL1 and RILPL2; these interactions are dependent on the phosphorylation of Thr-72 by LRRK2. Interacts with DZIP1; prevents inhibition by the GDP-dissociation inhibitor GDI2. Interacts with RAB3IP/Rabin8, RAB3IP functions as guanine exchange factor (GEF) towards RAB8A. Interacts (in GDP-bound form) with RPGR, RPGR functions as GEF towards RAB8A. Requires Mg(2+) as cofactor. Phosphorylation of Thr-72 in the switch II region by LRRK2 prevents the association of RAB regulatory proteins, including CHM, CHML and RAB GDP dissociation inhibitors GDI1 and GDI2. Phosphorylation by LRRK2 is required for localization to stressed lysosomes.

The protein localises to the cell membrane. Its subcellular location is the golgi apparatus. The protein resides in the endosome membrane. It is found in the recycling endosome membrane. It localises to the cell projection. The protein localises to the cilium. Its subcellular location is the cytoplasmic vesicle. The protein resides in the phagosome membrane. It is found in the cytoplasm. It localises to the cytoskeleton. The protein localises to the microtubule organizing center. Its subcellular location is the centrosome. The protein resides in the centriole. It is found in the cilium basal body. It localises to the midbody. The protein localises to the lysosome. It catalyses the reaction GTP + H2O = GDP + phosphate + H(+). Its activity is regulated as follows. Regulated by guanine nucleotide exchange factors (GEFs) such as RAB3IP/Rabin8 and RPGR which promote the exchange of bound GDP for free GTP, GTPase activating proteins (GAPs) which increase the GTP hydrolysis activity, and GDP dissociation inhibitors (GDIs) which inhibit the dissociation of the nucleotide from the GTPase. Activated in response to insulin. Its function is as follows. The small GTPases Rab are key regulators of intracellular membrane trafficking, from the formation of transport vesicles to their fusion with membranes. Rabs cycle between an inactive GDP-bound form and an active GTP-bound form that is able to recruit to membranes different sets of downstream effectors directly responsible for vesicle formation, movement, tethering and fusion. RAB8A is involved in polarized vesicular trafficking and neurotransmitter release. Together with RAB11A, RAB3IP, the exocyst complex, PARD3, PRKCI, ANXA2, CDC42 and DNMBP promotes transcytosis of PODXL to the apical membrane initiation sites (AMIS), apical surface formation and lumenogenesis. Regulates the compacted morphology of the Golgi. Together with MYO5B and RAB11A participates in epithelial cell polarization. Also involved in membrane trafficking to the cilium and ciliogenesis. Together with MICALL2, may also regulate adherens junction assembly. May play a role in insulin-induced transport to the plasma membrane of the glucose transporter GLUT4 and therefore play a role in glucose homeostasis. Involved in autophagy. Participates in the export of a subset of neosynthesized proteins through a Rab8-Rab10-Rab11-dependent endososomal export route. Targeted to and stabilized on stressed lysosomes through LRRK2 phosphorylation. Suppresses stress-induced lysosomal enlargement through EHBP1 and EHNP1L1 effector proteins. The protein is Ras-related protein Rab-8A of Mus musculus (Mouse).